The sequence spans 596 residues: DNA primase (596 aa).

The CHC2-type zinc-finger motif lies at 41 to 65 (CPFHHEKTPSFSVSQDKQIYKCFGC). The Toprim domain occupies 255–336 (DTIIIVEGYM…DIKIIKIPDG (82 aa)). Residues glutamate 261, aspartate 305, and aspartate 307 each contribute to the Mg(2+) site.

Belongs to the DnaG primase family. In terms of assembly, monomer. Interacts with DnaB. The cofactor is Zn(2+). Mg(2+) serves as cofactor.

The catalysed reaction is ssDNA + n NTP = ssDNA/pppN(pN)n-1 hybrid + (n-1) diphosphate.. Functionally, RNA polymerase that catalyzes the synthesis of short RNA molecules used as primers for DNA polymerase during DNA replication. This Clostridium acetobutylicum (strain ATCC 824 / DSM 792 / JCM 1419 / IAM 19013 / LMG 5710 / NBRC 13948 / NRRL B-527 / VKM B-1787 / 2291 / W) protein is DNA primase.